A 415-amino-acid polypeptide reads, in one-letter code: 6-phospho-beta-glucosidase BglT (415 aa).

1–64 provides a ligand contact to NAD(+); that stretch reads MRIAVIGGGS…DRFKVLISDT (64 aa). Substrate contacts are provided by arginine 87 and asparagine 140. Cysteine 162 contributes to the Mn(2+) binding site. Asparagine 163 contributes to the substrate binding site. Histidine 192 lines the Mn(2+) pocket. Tyrosine 241 serves as the catalytic Proton acceptor. Position 261 (arginine 261) interacts with substrate.

This sequence belongs to the glycosyl hydrolase 4 family. As to quaternary structure, homodimer or homotetramer. Exists in a homodimer/homotetramer equilibrium state in solution. NAD(+) is required as a cofactor. Mn(2+) serves as cofactor.

The enzyme catalyses 6-phospho-beta-D-glucosyl-(1-&gt;4)-D-glucose + H2O = D-glucose 6-phosphate + D-glucose. Hydrolyzes cellobiose 6'-phosphate into glucose 6-phosphate (Glc6P) and glucose. This is 6-phospho-beta-glucosidase BglT (bglT) from Thermotoga maritima (strain ATCC 43589 / DSM 3109 / JCM 10099 / NBRC 100826 / MSB8).